We begin with the raw amino-acid sequence, 692 residues long: Putative receptor-like protein kinase At1g80870 (692 aa).

The chain crosses the membrane as a helical span at residues leucine 20 to isoleucine 40. In terms of domain architecture, Protein kinase spans phenylalanine 81 to phenylalanine 673. ATP is bound by residues isoleucine 87–valine 95 and lysine 109. The Proton acceptor role is filled by aspartate 206. Disordered regions lie at residues glutamate 427 to methionine 446 and arginine 511 to methionine 533. Basic residues-rich tracts occupy residues lysine 432–arginine 444 and arginine 511–asparagine 524.

Belongs to the protein kinase superfamily. Ser/Thr protein kinase family.

It localises to the cell membrane. It catalyses the reaction L-seryl-[protein] + ATP = O-phospho-L-seryl-[protein] + ADP + H(+). It carries out the reaction L-threonyl-[protein] + ATP = O-phospho-L-threonyl-[protein] + ADP + H(+). This is Putative receptor-like protein kinase At1g80870 from Arabidopsis thaliana (Mouse-ear cress).